A 439-amino-acid polypeptide reads, in one-letter code: Amino-acid acetyltransferase (439 aa).

Positions 289-429 constitute an N-acetyltransferase domain; that stretch reads EDIRIATVQD…DHYNYQRRSK (141 aa).

Belongs to the acetyltransferase family. ArgA subfamily.

Its subcellular location is the cytoplasm. The catalysed reaction is L-glutamate + acetyl-CoA = N-acetyl-L-glutamate + CoA + H(+). Its pathway is amino-acid biosynthesis; L-arginine biosynthesis; N(2)-acetyl-L-ornithine from L-glutamate: step 1/4. The chain is Amino-acid acetyltransferase from Mannheimia succiniciproducens (strain KCTC 0769BP / MBEL55E).